We begin with the raw amino-acid sequence, 2124 residues long: Genome polyprotein (2124 aa).

A lipid anchor (N-myristoyl glycine; by host) is attached at Gly2. The host EIF4E binding stretch occupies residues 873–880 (VARDLLLI). The region spanning 1102-1264 (VQIATYFRNF…SAATKNGKLD (163 aa)) is the SF3 helicase domain. ATP is bound at residue 1130 to 1137 (GKPGVGKS). Residues 1415–1437 (DKPKEEEEEPEEKKEKKTEESKE) are compositionally biased toward basic and acidic residues. The disordered stretch occupies residues 1415–1446 (DKPKEEEEEPEEKKEKKTEESKEAAGPYNGPT). Tyr1442 is subject to O-(5'-phospho-RNA)-tyrosine. In terms of domain architecture, Peptidase C3 spans 1459–1648 (SPLMDMEKKI…VGTRLTARMI (190 aa)). Active-site for protease 3C activity residues include His1501, Asp1535, and Cys1612. Residues 1893-2011 (PYLYDFDYSN…ASKFELDLVM (119 aa)) form the RdRp catalytic domain. Catalysis depends on for RdRp activity residues Asp1899 and Asp1997.

This sequence belongs to the picornaviruses polyprotein family. As to quaternary structure, interacts with host EIF4E. Interacts with host IFIH1/MDA5; this interaction inhibits the induction of the IFN-beta signal pathway. Post-translationally, specific enzymatic cleavages by the viral protease in vivo yield a variety of precursors and mature proteins. The polyprotein seems to be cotranslationally cleaved at the 2A/2B junction by a ribosomal skip from one codon to the next without formation of a peptide bond. This process would release the P1-2A peptide from the translational complex. During virion maturation, immature virions are rendered infectious following cleavage of VP0 into VP4 and VP2. This maturation seems to be an autocatalytic event triggered by the presence of RNA in the capsid and is followed by a conformational change of the particle. In terms of processing, myristoylation is required during RNA encapsidation and formation of the mature virus particle. Post-translationally, uridylylated by the polymerase and is covalently linked to the 5'-end of genomic RNA. This uridylylated form acts as a nucleotide-peptide primer for the polymerase.

Its subcellular location is the virion. The protein localises to the host cytoplasm. The protein resides in the host nucleus. It is found in the host nucleolus. It localises to the host cytoplasmic vesicle membrane. The catalysed reaction is RNA(n) + a ribonucleoside 5'-triphosphate = RNA(n+1) + diphosphate. It carries out the reaction ATP + H2O = ADP + phosphate + H(+). It catalyses the reaction Selective cleavage of Gln-|-Gly bond in the poliovirus polyprotein. In other picornavirus reactions Glu may be substituted for Gln, and Ser or Thr for Gly.. Forms an icosahedral capsid of pseudo T=3 symmetry with capsid proteins VP2 and VP3. Together they form an icosahedral capsid composed of 60 copies of each VP1, VP2, and VP3, with a diameter of approximately 300 Angstroms. VP4 lies on the inner surface of the protein shell formed by VP1, VP2 and VP3. All the three latter proteins contain a beta-sheet structure called beta-barrel jelly roll. VP1 is situated at the 12 fivefold axes, whereas VP2 and VP3 are located at the quasi-sixfold axes. In terms of biological role, lies on the inner surface of the capsid shell. After binding to the host receptor, the capsid undergoes conformational changes. Capsid protein VP4 is released, capsid protein VP1 N-terminus is externalized, and together, they shape a pore in the host membrane through which the viral genome is translocated into the host cell cytoplasm. After genome has been released, the channel shrinks. Functionally, VP0 precursor is a component of immature procapsids. Its function is as follows. Involved in host translation shutoff by inhibiting cap-dependent mRNA translation. Nuclear localization is required for this function. The resulting inhibition of cellular protein synthesis serves to ensure maximal viral gene expression and to evade host immune response. Affects membrane integrity and causes an increase in membrane permeability. In terms of biological role, associates with and induces structural rearrangements of intracellular membranes. It displays RNA-binding, nucleotide binding and NTPase activities. Interacts with IFIH1/MDA5 to inhibit the induction of the IFN-beta signal pathway. Functionally, serves as membrane anchor via its hydrophobic domain. Its function is as follows. Forms a primer, VPg-pU, which is utilized by the polymerase for the initiation of RNA chains. Cysteine protease that generates mature viral proteins from the precursor polyprotein. In addition to its proteolytic activity, it binds to viral RNA, and thus influences viral genome replication. RNA and substrate cooperatively bind to the protease. Cleaves host PABP1, this cleavage is important for viral replication. Cleaves host TANK and disrupts the TANK-TBK1-IKKepsilon-IRF3 complex, thereby inhibiting the induction of the IFN-beta signal pathway. In terms of biological role, replicates the genomic and antigenomic RNAs by recognizing replications specific signals. Performs VPg uridylylation. The chain is Genome polyprotein from Cosavirus A (isolate Human/Pakistan/0553/-) (HCoSV-A).